Consider the following 48-residue polypeptide: Large ribosomal subunit protein eL40 (48 aa).

Belongs to the eukaryotic ribosomal protein eL40 family.

The protein is Large ribosomal subunit protein eL40 of Methanosphaerula palustris (strain ATCC BAA-1556 / DSM 19958 / E1-9c).